Here is a 131-residue protein sequence, read N- to C-terminus: Phosphoribosyl-AMP cyclohydrolase (131 aa).

Asp82 is a binding site for Mg(2+). Position 83 (Cys83) interacts with Zn(2+). Residues Asp84 and Asp86 each coordinate Mg(2+). Cys99 and Cys106 together coordinate Zn(2+).

It belongs to the PRA-CH family. As to quaternary structure, homodimer. The cofactor is Mg(2+). It depends on Zn(2+) as a cofactor.

It localises to the cytoplasm. It catalyses the reaction 1-(5-phospho-beta-D-ribosyl)-5'-AMP + H2O = 1-(5-phospho-beta-D-ribosyl)-5-[(5-phospho-beta-D-ribosylamino)methylideneamino]imidazole-4-carboxamide. It functions in the pathway amino-acid biosynthesis; L-histidine biosynthesis; L-histidine from 5-phospho-alpha-D-ribose 1-diphosphate: step 3/9. In terms of biological role, catalyzes the hydrolysis of the adenine ring of phosphoribosyl-AMP. The chain is Phosphoribosyl-AMP cyclohydrolase from Methanospirillum hungatei JF-1 (strain ATCC 27890 / DSM 864 / NBRC 100397 / JF-1).